The chain runs to 214 residues: Superoxide dismutase [Mn] (214 aa).

Residues His27, His82, Asp169, and His173 each coordinate Mn(2+).

This sequence belongs to the iron/manganese superoxide dismutase family. As to quaternary structure, homodimer. Mn(2+) serves as cofactor.

It catalyses the reaction 2 superoxide + 2 H(+) = H2O2 + O2. Functionally, destroys superoxide anion radicals which are normally produced within the cells and which are toxic to biological systems. The sequence is that of Superoxide dismutase [Mn] (sodA) from Pasteurella multocida (strain Pm70).